Reading from the N-terminus, the 198-residue chain is Outer-membrane lipoprotein carrier protein (198 aa).

Residues 1–16 (MKKWLVVFFLSASALA) form the signal peptide.

This sequence belongs to the LolA family. In terms of assembly, monomer.

It localises to the periplasm. In terms of biological role, participates in the translocation of lipoproteins from the inner membrane to the outer membrane. Only forms a complex with a lipoprotein if the residue after the N-terminal Cys is not an aspartate (The Asp acts as a targeting signal to indicate that the lipoprotein should stay in the inner membrane). The polypeptide is Outer-membrane lipoprotein carrier protein (Vibrio vulnificus (strain YJ016)).